The following is a 274-amino-acid chain: Large ribosomal subunit protein uL2 (274 aa).

Positions valine 223 to lysine 274 are disordered.

The protein belongs to the universal ribosomal protein uL2 family. In terms of assembly, part of the 50S ribosomal subunit. Forms a bridge to the 30S subunit in the 70S ribosome.

Its function is as follows. One of the primary rRNA binding proteins. Required for association of the 30S and 50S subunits to form the 70S ribosome, for tRNA binding and peptide bond formation. It has been suggested to have peptidyltransferase activity; this is somewhat controversial. Makes several contacts with the 16S rRNA in the 70S ribosome. This is Large ribosomal subunit protein uL2 from Shewanella amazonensis (strain ATCC BAA-1098 / SB2B).